Here is a 440-residue protein sequence, read N- to C-terminus: Transposon Ty1-OL Gag polyprotein (440 aa).

Polar residues-rich tracts occupy residues 1 to 23 (MESQ…SVTS), 48 to 60 (TKAN…TPAS), and 127 to 152 (QSQF…GNTF). Disordered stretches follow at residues 1 to 93 (MESQ…MMTQ), 126 to 173 (PQSQ…RPPP), and 352 to 440 (GSRN…PGTY). Residues 153 to 165 (TDSSSADSDMTST) are compositionally biased toward low complexity. An RNA-binding region spans residues 299–401 (NNGIHINNKV…NSKSKTARAH (103 aa)). The span at 402–418 (NVSTSNNSPSTDNDSIS) shows a compositional bias: low complexity. Serine 416 carries the post-translational modification Phosphoserine. The span at 419-428 (KSTTEPIQLN) shows a compositional bias: polar residues. Positions 429–440 (NKHDLHLRPGTY) are enriched in basic and acidic residues.

As to quaternary structure, homotrimer.

Its subcellular location is the cytoplasm. Its function is as follows. Capsid protein (CA) is the structural component of the virus-like particle (VLP), forming the shell that encapsulates the retrotransposons dimeric RNA genome. The particles are assembled from trimer-clustered units and there are holes in the capsid shells that allow for the diffusion of macromolecules. CA also has nucleocapsid-like chaperone activity, promoting primer tRNA(i)-Met annealing to the multipartite primer-binding site (PBS), dimerization of Ty1 RNA and initiation of reverse transcription. The sequence is that of Transposon Ty1-OL Gag polyprotein (TY1A-OL) from Saccharomyces cerevisiae (strain ATCC 204508 / S288c) (Baker's yeast).